The following is a 261-amino-acid chain: Insulin-like growth factor-binding protein-related protein 1 (261 aa).

An N-terminal signal peptide occupies residues 1-17 (MWIPLLLVALVVPAIRC). The region spanning 18–101 (ERKCGECNPE…DPPEAMCVCL (84 aa)) is the IGFBP N-terminal domain. 8 cysteine pairs are disulfide-bonded: Cys-21-Cys-45, Cys-24-Cys-47, Cys-29-Cys-48, Cys-36-Cys-51, Cys-59-Cys-82, Cys-76-Cys-98, Cys-100-Cys-118, and Cys-107-Cys-139. The region spanning 70-141 (NRGHGPCGEY…RAMHRGPCKS (72 aa)) is the Kazal-like domain. The 101-residue stretch at 143–243 (PKITSPPEEA…GESSAAARVV (101 aa)) folds into the Ig-like C2-type domain. Asn-154 is a glycosylation site (N-linked (GlcNAc...) asparagine). Cys-164 and Cys-227 are joined by a disulfide.

Expressed by the venom gland.

It is found in the secreted. This Cupiennius salei (American wandering spider) protein is Insulin-like growth factor-binding protein-related protein 1.